A 48-amino-acid chain; its full sequence is Sulfide dehydrogenase [flavocytochrome c] flavoprotein chain (48 aa).

40–46 is an FAD binding site; sequence VTCPFSN.

As to quaternary structure, dimer of one cytochrome and one flavoprotein.

It localises to the periplasm. It catalyses the reaction hydrogen sulfide + 2 Fe(III)-[cytochrome c] = sulfur + 2 Fe(II)-[cytochrome c] + H(+). This is Sulfide dehydrogenase [flavocytochrome c] flavoprotein chain from Chlorobaculum thiosulfatiphilum (Chlorobium limicola f.sp. thiosulfatophilum).